A 315-amino-acid chain; its full sequence is NAD kinase (315 aa).

Catalysis depends on D91, which acts as the Proton acceptor. NAD(+) is bound by residues 91 to 92 (DG), R96, 165 to 166 (NE), D195, and 206 to 211 (TAYAFS).

The protein belongs to the NAD kinase family. The cofactor is a divalent metal cation.

It localises to the cytoplasm. It carries out the reaction NAD(+) + ATP = ADP + NADP(+) + H(+). In terms of biological role, involved in the regulation of the intracellular balance of NAD and NADP, and is a key enzyme in the biosynthesis of NADP. Catalyzes specifically the phosphorylation on 2'-hydroxyl of the adenosine moiety of NAD to yield NADP. The sequence is that of NAD kinase from Rhodococcus erythropolis (strain PR4 / NBRC 100887).